A 524-amino-acid chain; its full sequence is Inosine-5'-monophosphate dehydrogenase 4 (524 aa).

CBS domains are found at residues 122-183 (FINS…VVSE) and 185-241 (MTKN…PLAS). The residue at position 125 (Ser125) is a Phosphoserine. NAD(+)-binding positions include 279–281 (DSS) and 329–331 (GMG). Positions 331 and 333 each coordinate K(+). Residue Ser334 participates in IMP binding. Cys336 is a K(+) binding site. Cys336 acts as the Thioimidate intermediate in catalysis. IMP-binding positions include 369–371 (DGG), 392–393 (GG), and 416–420 (YRGMG). Arg438 (proton acceptor) is an active-site residue. An IMP-binding site is contributed by Gln450. Residues Glu509, Gly510, and Gly511 each coordinate K(+).

The protein belongs to the IMPDH/GMPR family. Homotetramer. Seems to be able to form heterotetramers composed from more than 1 of the 3 IMPDH gene products (IMD2-4). K(+) is required as a cofactor.

It localises to the cytoplasm. The enzyme catalyses IMP + NAD(+) + H2O = XMP + NADH + H(+). Its pathway is purine metabolism; XMP biosynthesis via de novo pathway; XMP from IMP: step 1/1. Mycophenolic acid (MPA) is a non-competitive inhibitor that prevents formation of the closed enzyme conformation by binding to the same site as the amobile flap. In contrast, mizoribine monophosphate (MZP) is a competitive inhibitor that induces the closed conformation. MPA is a potent inhibitor of mammalian IMPDHs but a poor inhibitor of the bacterial enzymes. MZP is a more potent inhibitor of bacterial IMPDH. Catalyzes the conversion of inosine 5'-phosphate (IMP) to xanthosine 5'-phosphate (XMP), the first committed and rate-limiting step in the de novo synthesis of guanine nucleotides, and therefore plays an important role in the regulation of cell growth. The polypeptide is Inosine-5'-monophosphate dehydrogenase 4 (Saccharomyces cerevisiae (strain ATCC 204508 / S288c) (Baker's yeast)).